A 710-amino-acid polypeptide reads, in one-letter code: MIKGKRSFPKRQNNVRVLNSSRVEEFDISDHNQSIDSINELSAYEVLSLRKKTEDGIKSNLNEERVASSLTSRAEDNKPCRDFVKSDRNVLASDFLSKYGEETDEMNKTKKKQKKIMKKEIRKRTKRKRKSVNKRELSGSIKTWIPTHSGSSVFSSLFRNCDDSKEMXDSIVDCLSEGEEIEEIKIVNLSDSSHGSSFESDEINEDKNMVDEEENDEELIDERSTNSAVRENFVRCYGKEKDEDASDVVIDFEQKPFSTHCDSVQNGLDAIQWLIDPYDLTQFFKMVFQKKVFLVCHNNPNYYGNLFSTAKFIDILQTDYVEYGTNVNVAIYKNQQRSTLNGSGKVYPQAIQKSIKAGCSIQLTNPQSFCDNVWYYCDLLQEVFGCFVGANIYITPANTAGFAPHWDDIDAFLLQLEGRKHWKIYAPDSDDEMLPRLPSGNFTDNDVINRMLVFDDWLEQGDMLYIPRGYIHQGFADKDVHSLHLTVSVCRNVTYADLLERVIPPALSNFAEQNVNIRKSLPARYLDMTGVLECDYPLLKTGTMKLHRFLDSIFSNFCKYIKELSEPAVDMMAREFMRTALPPVLTKEEKDMTALCVAGSSLYGDKEHIFTKNTSIKLLRRHGQRLIYESEERCFIVHRMANSRVYEGRPEVLFDLDVELAEGFANLVNAYPRWCLVSDLKCNDAADNIRLAELLYSNGLLMAEFREAMK.

The segment at 103–137 is disordered; the sequence is TDEMNKTKKKQKKIMKKEIRKRTKRKRKSVNKREL. Basic residues predominate over residues 109–132; the sequence is TKKKQKKIMKKEIRKRTKRKRKSV. Residues 359–506 form the JmjC domain; that stretch reads CSIQLTNPQS…DLLERVIPPA (148 aa). Residues His-405, Asp-407, and His-472 each coordinate Fe cation.

Belongs to the ROX family. NO66 subfamily. It depends on Fe(2+) as a cofactor.

It is found in the nucleus. The enzyme catalyses N(6),N(6)-dimethyl-L-lysyl(36)-[histone H3] + 2 2-oxoglutarate + 2 O2 = L-lysyl(36)-[histone H3] + 2 formaldehyde + 2 succinate + 2 CO2. Functionally, oxygenase that can act as both a histone lysine demethylase and a ribosomal histidine hydroxylase. Specifically demethylates 'Lys-4' (H3K4me) and 'Lys-36' (H3K36me) of histone H3, thereby playing a central role in histone code. This chain is Bifunctional lysine-specific demethylase and histidyl-hydroxylase NO66, found in Brugia malayi (Filarial nematode worm).